The primary structure comprises 1239 residues: DNA topoisomerase 2 (1239 aa).

ATP-binding positions include Asn65, Asn96, 124 to 126 (SSN), 137 to 144 (GRHGYGAK), and 354 to 356 (QSK). A Toprim domain is found at 434–548 (RTLIVTEGDS…SLLQHNPGYI (115 aa)). Residues Glu440, Asp517, and Asp519 each contribute to the Mg(2+) site. Residues 685–1101 (IPHCVDGLKP…TPVKMWLTDL (417 aa)) form the Topo IIA-type catalytic domain. Tyr775 (O-(5'-phospho-DNA)-tyrosine intermediate) is an active-site residue. Positions 956-965 (ALSQRIYING) are interaction with DNA. The interval 1167–1206 (PASKRKPEDTYGGALSSGGSTRNVGKRLTGARGAKKKKVV) is disordered.

Belongs to the type II topoisomerase family. Homodimer. Mg(2+) is required as a cofactor. Mn(2+) serves as cofactor. The cofactor is Ca(2+).

It is found in the nucleus. The protein resides in the mitochondrion matrix. It localises to the kinetoplast. It carries out the reaction ATP-dependent breakage, passage and rejoining of double-stranded DNA.. Control of topological states of DNA by transient breakage and subsequent rejoining of DNA strands. Topoisomerase II makes double-strand breaks. This chain is DNA topoisomerase 2 (TOP2), found in Crithidia fasciculata.